The sequence spans 138 residues: Probable glycine cleavage system H protein 1 (138 aa).

The 83-residue stretch at 30–112 (IATVGITDYA…YGRGWIFKLK (83 aa)) folds into the Lipoyl-binding domain. At K71 the chain carries N6-lipoyllysine.

It belongs to the GcvH family. In terms of assembly, the glycine cleavage system is composed of four proteins: P, T, L and H. It depends on (R)-lipoate as a cofactor.

Functionally, the glycine cleavage system catalyzes the degradation of glycine. The H protein shuttles the methylamine group of glycine from the P protein to the T protein. This is Probable glycine cleavage system H protein 1 from Sulfolobus acidocaldarius (strain ATCC 33909 / DSM 639 / JCM 8929 / NBRC 15157 / NCIMB 11770).